The following is a 255-amino-acid chain: MKNNQEYILVVDIGNSYTKIGIFEKEKENTTSIILFPTDSETNIATLSKKMNVFKKYNIKHSIVGSVVPKLKPTYFKTIKKMFNIEPYYISETTKYSFLIDESPNKELGDDLKALCEYCVSVNKNCIGISFGTAIASVYLKNNSLVGASIAAGLGFGLNKLIEKASLLKKSKIDKFSSDFFGTNTISALESGINNLRSGFAYNFYNQAKKDNLNSDLKCIITGGESYNINISSFEYEINKEAILLGFKKIYFLNN.

Position 12–19 (12–19 (DIGNSYTK)) interacts with ATP. 109 to 112 (GDDL) contacts substrate. The Proton acceptor role is filled by Asp111. Thr133 lines the ATP pocket. Thr185 is a binding site for substrate.

It belongs to the type III pantothenate kinase family. Homodimer. The cofactor is NH4(+). It depends on K(+) as a cofactor.

The protein localises to the cytoplasm. It carries out the reaction (R)-pantothenate + ATP = (R)-4'-phosphopantothenate + ADP + H(+). Its pathway is cofactor biosynthesis; coenzyme A biosynthesis; CoA from (R)-pantothenate: step 1/5. In terms of biological role, catalyzes the phosphorylation of pantothenate (Pan), the first step in CoA biosynthesis. This is Type III pantothenate kinase from Malacoplasma penetrans (strain HF-2) (Mycoplasma penetrans).